A 73-amino-acid chain; its full sequence is MKRDIHPEYVETQVSCTCGASFTTRSTISSGTVRAEVCSECHPFYTGKQKILDTGGRVARFEARFGKAAAAKK.

Positions 16, 18, 38, and 41 each coordinate Zn(2+).

The protein belongs to the bacterial ribosomal protein bL31 family. Type A subfamily. As to quaternary structure, part of the 50S ribosomal subunit. Requires Zn(2+) as cofactor.

Its function is as follows. Binds the 23S rRNA. In Streptomyces avermitilis (strain ATCC 31267 / DSM 46492 / JCM 5070 / NBRC 14893 / NCIMB 12804 / NRRL 8165 / MA-4680), this protein is Large ribosomal subunit protein bL31.